Consider the following 156-residue polypeptide: Translation initiation factor IF-1, chloroplastic (156 aa).

The interval 1–35 (MAASLTLMTSPPCSRSSKSPSPSPSPSLSCNQQQQ) is disordered. The N-terminal 49 residues, 1-49 (MAASLTLMTSPPCSRSSKSPSPSPSPSLSCNQQQQYKPLLHHQWPPQIS), are a transit peptide targeting the chloroplast. Low complexity predominate over residues 10 to 20 (SPPCSRSSKSP). The S1-like domain occupies 72 to 148 (GGSPSVQEQK…TRGRITYRLR (77 aa)).

The protein belongs to the IF-1 family. As to quaternary structure, component of the 30S ribosomal translation pre-initiation complex which assembles on the 30S ribosome in the order IF-2 and IF-3, IF-1 and N-formylmethionyl-tRNA(fMet); mRNA recruitment can occur at any time during PIC assembly.

It localises to the plastid. Its subcellular location is the chloroplast. Its function is as follows. One of the essential components for the initiation of protein synthesis. Stabilizes the binding of IF-2 and IF-3 on the 30S subunit to which N-formylmethionyl-tRNA(fMet) subsequently binds. Helps modulate mRNA selection, yielding the 30S pre-initiation complex (PIC). Upon addition of the 50S ribosomal subunit IF-1, IF-2 and IF-3 are released leaving the mature 70S translation initiation complex. The protein is Translation initiation factor IF-1, chloroplastic (infA) of Mesembryanthemum crystallinum (Common ice plant).